A 98-amino-acid polypeptide reads, in one-letter code: Large ribosomal subunit protein uL23 (98 aa).

It belongs to the universal ribosomal protein uL23 family. As to quaternary structure, part of the 50S ribosomal subunit. Contacts protein L29, and trigger factor when it is bound to the ribosome.

One of the early assembly proteins it binds 23S rRNA. One of the proteins that surrounds the polypeptide exit tunnel on the outside of the ribosome. Forms the main docking site for trigger factor binding to the ribosome. The protein is Large ribosomal subunit protein uL23 of Acidothermus cellulolyticus (strain ATCC 43068 / DSM 8971 / 11B).